A 77-amino-acid polypeptide reads, in one-letter code: Beta-defensin 135 (77 aa).

A signal peptide spans Met-1–Ser-24. 3 cysteine pairs are disulfide-bonded: Cys-37-Cys-64, Cys-44-Cys-58, and Cys-48-Cys-65.

Belongs to the beta-defensin family.

The protein resides in the secreted. Its function is as follows. Has antibacterial activity. The protein is Beta-defensin 135 (DEFB135) of Homo sapiens (Human).